The sequence spans 218 residues: Embryonic polyadenylate-binding protein 2-B (218 aa).

Disordered regions lie at residues 1-24 (MSERVSEEPGLDKGDRAEECELDD) and 169-218 (RTNM…NNPY). The RRM domain maps to 93–170 (RSVYVGNVDY…RTIKVLPKRT (78 aa)). Over residues 198–209 (QRPRGRPFRGRG) the composition is skewed to basic residues.

Homodimer; Upon poly(A) binding, undergoes a dimer-monomer transition that removes the polyproline motif from the RNA recognition site and allows it to be replaced by the adenosine nucleotides of poly(A).

The protein localises to the cytoplasm. In terms of biological role, binds the poly(A) tail of mRNA. Unable to interact with the cap-binding complex and is therefore unlikely to be involved in translation initiation. This chain is Embryonic polyadenylate-binding protein 2-B (Pabpn1l-b), found in Xenopus laevis (African clawed frog).